We begin with the raw amino-acid sequence, 309 residues long: p-hydroxybenzoic acid efflux pump subunit AaeA (309 aa).

The chain crosses the membrane as a helical span at residues 12–32; sequence AITVVLVILAFIAIFNAWVYY.

It belongs to the membrane fusion protein (MFP) (TC 8.A.1) family.

It localises to the cell inner membrane. Forms an efflux pump with AaeB. This Escherichia coli O157:H7 protein is p-hydroxybenzoic acid efflux pump subunit AaeA.